The following is a 195-amino-acid chain: Envelope glycoprotein L (195 aa).

A signal peptide spans 1–25 (MKIYRVLVHLSFVLGMFTKTNTVLA). Residues 28–157 (KYDLVHGFMR…LIAPADISCY (130 aa)) are interaction with gH. Residues 28–195 (KYDLVHGFMR…TTSGSRRANA (168 aa)) enclose the gL alphaherpesvirus-type domain. Intrachain disulfides connect Cys49/Cys78 and Cys156/Cys178.

This sequence belongs to the herpesviridae glycoprotein L (gL) family. Alphaherpesvirinae gL subfamily. Interacts with glycoprotein H (gH); this interaction is necessary for the correct processing and cell surface expression of gH. The heterodimer gH/gL seems to interact with gB trimers during fusion.

The protein localises to the virion membrane. It is found in the host cell membrane. It localises to the host Golgi apparatus. The protein resides in the host trans-Golgi network. The heterodimer glycoprotein H-glycoprotein L is required for the fusion of viral and plasma membranes leading to virus entry into the host cell. Acts as a functional inhibitor of gH and maintains gH in an inhibited form. Upon binding to host integrins, gL dissociates from gH leading to activation of the viral fusion glycoproteins gB and gH. In Gallus gallus (Chicken), this protein is Envelope glycoprotein L.